The following is a 322-amino-acid chain: Aspartate carbamoyltransferase catalytic subunit (322 aa).

2 residues coordinate carbamoyl phosphate: Arg-65 and Thr-66. Lys-93 provides a ligand contact to L-aspartate. Arg-115, His-143, and Gln-146 together coordinate carbamoyl phosphate. Residues Arg-176 and Arg-230 each contribute to the L-aspartate site. Gly-271 and Pro-272 together coordinate carbamoyl phosphate.

Belongs to the aspartate/ornithine carbamoyltransferase superfamily. ATCase family. Heterododecamer (2C3:3R2) of six catalytic PyrB chains organized as two trimers (C3), and six regulatory PyrI chains organized as three dimers (R2).

The catalysed reaction is carbamoyl phosphate + L-aspartate = N-carbamoyl-L-aspartate + phosphate + H(+). Its pathway is pyrimidine metabolism; UMP biosynthesis via de novo pathway; (S)-dihydroorotate from bicarbonate: step 2/3. Its function is as follows. Catalyzes the condensation of carbamoyl phosphate and aspartate to form carbamoyl aspartate and inorganic phosphate, the committed step in the de novo pyrimidine nucleotide biosynthesis pathway. The polypeptide is Aspartate carbamoyltransferase catalytic subunit (Brucella anthropi (strain ATCC 49188 / DSM 6882 / CCUG 24695 / JCM 21032 / LMG 3331 / NBRC 15819 / NCTC 12168 / Alc 37) (Ochrobactrum anthropi)).